Here is a 339-residue protein sequence, read N- to C-terminus: 3-isopropylmalate dehydrogenase (339 aa).

Arginine 88, arginine 98, arginine 122, and aspartate 212 together coordinate substrate. Mg(2+) is bound by residues aspartate 212, aspartate 236, and aspartate 240. 272–284 is an NAD(+) binding site; it reads GSAPDIAGKGIAD.

This sequence belongs to the isocitrate and isopropylmalate dehydrogenases family. LeuB type 2 subfamily. Homodimer. Mg(2+) serves as cofactor. Requires Mn(2+) as cofactor.

The protein localises to the cytoplasm. It carries out the reaction (2R,3S)-3-isopropylmalate + NAD(+) = 4-methyl-2-oxopentanoate + CO2 + NADH. Its pathway is amino-acid biosynthesis; L-leucine biosynthesis; L-leucine from 3-methyl-2-oxobutanoate: step 3/4. Functionally, catalyzes the oxidation of 3-carboxy-2-hydroxy-4-methylpentanoate (3-isopropylmalate) to 3-carboxy-4-methyl-2-oxopentanoate. The product decarboxylates to 4-methyl-2 oxopentanoate. The sequence is that of 3-isopropylmalate dehydrogenase from Corynebacterium aurimucosum (strain ATCC 700975 / DSM 44827 / CIP 107346 / CN-1) (Corynebacterium nigricans).